Reading from the N-terminus, the 104-residue chain is Integration host factor subunit beta (104 aa).

The protein belongs to the bacterial histone-like protein family. As to quaternary structure, heterodimer of an alpha and a beta chain.

Functionally, this protein is one of the two subunits of integration host factor, a specific DNA-binding protein that functions in genetic recombination as well as in transcriptional and translational control. The protein is Integration host factor subunit beta (ihfB) of Xylella fastidiosa (strain 9a5c).